The sequence spans 347 residues: DNA polymerase III subunit delta (347 aa).

Belongs to the DNA polymerase HolA subunit family. In terms of assembly, component of the DNA clamp loading complex consisting of tau(3):delta(1):delta'(1). The DNA polymerase III holoenzyme complex contains at least 10 different subunits organized into 3 functionally essential subassemblies: the Pol III core, the beta sliding clamp processivity factor and the clamp-loading complex. The Pol III core (subunits alpha, epsilon and theta) contains the polymerase and the 3'-5' exonuclease proofreading activities. The polymerase is tethered to the template via the dimeric beta sliding clamp processivity factor. The DNA clamp-loading complex assembles the beta sliding clamp onto the primed template and plays a central role in the organization and communication at the replication fork.

The protein resides in the cytoplasm. It is found in the nucleoid. It catalyses the reaction DNA(n) + a 2'-deoxyribonucleoside 5'-triphosphate = DNA(n+1) + diphosphate. Functionally, part of the beta sliding clamp loading complex, which hydrolyzes ATP to load the beta clamp onto primed DNA to form the DNA replication pre-initiation complex. DNA polymerase III is a complex, multichain enzyme responsible for most of the replicative synthesis in bacteria. This DNA polymerase also exhibits 3'-5' exonuclease activity. The delta subunit is the wrench that will open the beta subunit dimer. The DNA clamp loading complex (tau(3),delta,delta') is thought to load beta dimers onto DNA by binding ATP which alters the complex's conformation so it can bind beta sliding clamp dimers and open them at one interface. Primed DNA is recognized, ATP is hydrolyzed releasing the clamp loading complex and closing the beta sliding clamp ring around the primed DNA. This is DNA polymerase III subunit delta from Bacillus subtilis (strain 168).